Consider the following 232-residue polypeptide: RNA chaperone ProQ (232 aa).

Positions 105-182 (EAKARVQAQR…REEQHTPVSD (78 aa)) are disordered. The segment covering 117 to 136 (QQAKKREAAAAAGEKEDAPR) has biased composition (basic and acidic residues). Residues 137-146 (RERKPRPTTP) are compositionally biased toward basic residues. Positions 147–177 (RRKEGAERKPRSQKPVEKAPKTVKAPREEQH) are enriched in basic and acidic residues.

Belongs to the ProQ family.

The protein resides in the cytoplasm. Functionally, RNA chaperone with significant RNA binding, RNA strand exchange and RNA duplexing activities. May regulate ProP activity through an RNA-based, post-transcriptional mechanism. The sequence is that of RNA chaperone ProQ from Escherichia coli (strain UTI89 / UPEC).